Here is a 440-residue protein sequence, read N- to C-terminus: Transposon Ty1-MR1 Gag polyprotein (440 aa).

Polar residues-rich tracts occupy residues 1 to 31 (MESQ…TTQD), 46 to 60 (VSTQ…TPLS), and 137 to 168 (VGTH…TNQH). 3 disordered regions span residues 1 to 88 (MESQ…YPQQ), 137 to 174 (VGTH…PPPI), and 350 to 424 (QQES…TTEP). Residues 299–401 (NNGIPINNKV…NSQSRTARAH (103 aa)) form an RNA-binding region. Positions 363–372 (SPSDEKKDSR) are enriched in basic and acidic residues. Residues 373–411 (TYTNTTKPKSITRNSQKPNNSQSRTARAHNVSTFNNSPG) show a composition bias toward polar residues.

Homotrimer.

Its subcellular location is the cytoplasm. Capsid protein (CA) is the structural component of the virus-like particle (VLP), forming the shell that encapsulates the retrotransposons dimeric RNA genome. The particles are assembled from trimer-clustered units and there are holes in the capsid shells that allow for the diffusion of macromolecules. CA also has nucleocapsid-like chaperone activity, promoting primer tRNA(i)-Met annealing to the multipartite primer-binding site (PBS), dimerization of Ty1 RNA and initiation of reverse transcription. This is Transposon Ty1-MR1 Gag polyprotein (TY1A-MR1) from Saccharomyces cerevisiae (strain ATCC 204508 / S288c) (Baker's yeast).